A 438-amino-acid polypeptide reads, in one-letter code: UDP-N-acetylmuramoylalanine--D-glutamate ligase (438 aa).

112–118 (GSNGKST) contacts ATP.

The protein belongs to the MurCDEF family.

The protein resides in the cytoplasm. The enzyme catalyses UDP-N-acetyl-alpha-D-muramoyl-L-alanine + D-glutamate + ATP = UDP-N-acetyl-alpha-D-muramoyl-L-alanyl-D-glutamate + ADP + phosphate + H(+). It participates in cell wall biogenesis; peptidoglycan biosynthesis. In terms of biological role, cell wall formation. Catalyzes the addition of glutamate to the nucleotide precursor UDP-N-acetylmuramoyl-L-alanine (UMA). This Salmonella typhi protein is UDP-N-acetylmuramoylalanine--D-glutamate ligase.